Reading from the N-terminus, the 101-residue chain is Small ribosomal subunit protein uS14 (101 aa).

The protein belongs to the universal ribosomal protein uS14 family. As to quaternary structure, part of the 30S ribosomal subunit. Contacts proteins S3 and S10.

Functionally, binds 16S rRNA, required for the assembly of 30S particles and may also be responsible for determining the conformation of the 16S rRNA at the A site. This chain is Small ribosomal subunit protein uS14, found in Bordetella petrii (strain ATCC BAA-461 / DSM 12804 / CCUG 43448).